Consider the following 445-residue polypeptide: 3-phosphoshikimate 1-carboxyvinyltransferase (445 aa).

The segment at 1-25 (MSGHGPAQPMTARRSGPLKGRAEIP) is disordered. 3-phosphoshikimate-binding residues include Lys28, Ser29, and Arg33. Lys28 is a phosphoenolpyruvate binding site. Phosphoenolpyruvate is bound by residues Gly101 and Arg129. Positions 174, 176, 326, and 353 each coordinate 3-phosphoshikimate. Position 176 (Gln176) interacts with phosphoenolpyruvate. The Proton acceptor role is filled by Asp326. Residues Arg357 and Arg400 each coordinate phosphoenolpyruvate.

This sequence belongs to the EPSP synthase family. As to quaternary structure, monomer.

It is found in the cytoplasm. The enzyme catalyses 3-phosphoshikimate + phosphoenolpyruvate = 5-O-(1-carboxyvinyl)-3-phosphoshikimate + phosphate. It participates in metabolic intermediate biosynthesis; chorismate biosynthesis; chorismate from D-erythrose 4-phosphate and phosphoenolpyruvate: step 6/7. Functionally, catalyzes the transfer of the enolpyruvyl moiety of phosphoenolpyruvate (PEP) to the 5-hydroxyl of shikimate-3-phosphate (S3P) to produce enolpyruvyl shikimate-3-phosphate and inorganic phosphate. The protein is 3-phosphoshikimate 1-carboxyvinyltransferase of Cereibacter sphaeroides (strain ATCC 17029 / ATH 2.4.9) (Rhodobacter sphaeroides).